Consider the following 280-residue polypeptide: 3-methyl-2-oxobutanoate hydroxymethyltransferase (280 aa).

The Mg(2+) site is built by aspartate 60 and aspartate 99. 3-methyl-2-oxobutanoate contacts are provided by residues 60–61, aspartate 99, and lysine 129; that span reads DS. Glutamate 131 contributes to the Mg(2+) binding site. The active-site Proton acceptor is the glutamate 198.

This sequence belongs to the PanB family. Homodecamer; pentamer of dimers. Requires Mg(2+) as cofactor.

The protein localises to the cytoplasm. The catalysed reaction is 3-methyl-2-oxobutanoate + (6R)-5,10-methylene-5,6,7,8-tetrahydrofolate + H2O = 2-dehydropantoate + (6S)-5,6,7,8-tetrahydrofolate. It functions in the pathway cofactor biosynthesis; (R)-pantothenate biosynthesis; (R)-pantoate from 3-methyl-2-oxobutanoate: step 1/2. In terms of biological role, catalyzes the reversible reaction in which hydroxymethyl group from 5,10-methylenetetrahydrofolate is transferred onto alpha-ketoisovalerate to form ketopantoate. This is 3-methyl-2-oxobutanoate hydroxymethyltransferase from Thermobifida fusca (strain YX).